A 984-amino-acid polypeptide reads, in one-letter code: Putative formate dehydrogenase SAR2393 (984 aa).

In terms of domain architecture, 2Fe-2S ferredoxin-type spans 3–79 (EHLVVTLDGK…PMTVNTVNND (77 aa)). [2Fe-2S] cluster is bound by residues Cys37, Cys48, Cys51, and Cys63. The region spanning 79-119 (DVKDAQKEALDRILEKHMLYCTVCDYNNGDCEIHNTMDAWG) is the 4Fe-4S His(Cys)3-ligated-type domain. 16 residues coordinate [4Fe-4S] cluster: His95, Cys99, Cys102, Cys109, Cys147, Cys150, Cys153, Cys157, Cys190, Cys193, Cys196, Cys200, Cys264, Cys267, Cys271, and Cys299. 4Fe-4S ferredoxin-type domains follow at residues 138–165 (PFYR…LNET) and 181–211 (NDVP…VNME). The segment at 252 to 984 (MRKERIKKTK…YVFPGNQVDK (733 aa)) is formate dehydrogenase. The 4Fe-4S Mo/W bis-MGD-type domain occupies 257–313 (IKKTKTVCTYCGVGCSFEVWTKDREILKVQPSHDSPANKIATCVKGKFSWGHINSDQ).

It in the C-terminal section; belongs to the prokaryotic molybdopterin-containing oxidoreductase family. [2Fe-2S] cluster is required as a cofactor. The cofactor is [4Fe-4S] cluster. Mo-bis(molybdopterin guanine dinucleotide) serves as cofactor.

The catalysed reaction is formate + NAD(+) = CO2 + NADH. This Staphylococcus aureus (strain MRSA252) protein is Putative formate dehydrogenase SAR2393.